The sequence spans 71 residues: Small ribosomal subunit protein bS21 (71 aa).

The protein belongs to the bacterial ribosomal protein bS21 family.

This chain is Small ribosomal subunit protein bS21, found in Alteromonas mediterranea (strain DSM 17117 / CIP 110805 / LMG 28347 / Deep ecotype).